Consider the following 1087-residue polypeptide: Voltage-gated inwardly rectifying potassium channel KCNH3 (1087 aa).

At 1 to 228 (MPAMRGLLAP…HCGALRATWD (228 aa)) the chain is on the cytoplasmic side. Residues 18-90 (IATRFDGTHS…QQIRKALDEH (73 aa)) enclose the PAS domain. A PAC domain is found at 93-145 (FKAELILYRKSGLPFWCLLDVIPIKNEKGEVALFLVSHKDISETKNRGGPDNW). Basic and acidic residues predominate over residues 137 to 150 (KNRGGPDNWKERGG). The segment at 137–161 (KNRGGPDNWKERGGGRRRYGRAGSK) is disordered. A helical transmembrane segment spans residues 229–249 (GFILLATLYVAVTVPYSVCVS). Topologically, residues 250–259 (TAREPSAARG) are extracellular. Residues 260–280 (PPSVCDLAVEVLFILDIVLNF) traverse the membrane as a helical segment. Topologically, residues 281–302 (RTTFVSKSGQVVFAPKSICLHY) are cytoplasmic. Residues 303–323 (VTTWFLLDVIAALPFDLLHAF) traverse the membrane as a helical segment. At 324 to 331 (KVNVYVGA) the chain is on the extracellular side. Residues 332–352 (HLLKTVRLLRLLRLLPRLDRY) traverse the membrane as a helical; Voltage-sensor segment. The Cytoplasmic portion of the chain corresponds to 353–361 (SQYSAVVLT). Residues 362–382 (LLMAVFALLAHWVACVWFYIG) traverse the membrane as a helical segment. Topologically, residues 383-456 (QQEIENSESE…GGPSLRSAYI (74 aa)) are extracellular. Positions 416-436 (SPDGGNSSGQSENCSSSGGGS) are disordered. The span at 419 to 431 (GGNSSGQSENCSS) shows a compositional bias: low complexity. Residues N421, N428, and N439 are each glycosylated (N-linked (GlcNAc...) asparagine). The pore-forming intramembrane region spans 457 to 477 (TSLYFALSSLTSVGFGNVSAN). A Selectivity filter motif is present at residues 468–473 (SVGFGN). Residues 478 to 482 (TDTEK) lie on the Extracellular side of the membrane. The helical transmembrane segment at 483–503 (IFSICTMLIGALMHAVVFGNV) threads the bilayer. The Cytoplasmic segment spans residues 504 to 1087 (TAIIQRMYAR…QWTQEEGTGV (584 aa)). Residue 585–700 (LFEAASRGCL…FAPRFSRGLR (116 aa)) participates in a nucleoside 3',5'-cyclic phosphate binding. Disordered regions lie at residues 733 to 813 (EKET…LQLP) and 975 to 1061 (LMAP…PWDP). Residues 776–788 (TAPRPRLGGRGRP) are compositionally biased toward basic residues.

This sequence belongs to the potassium channel family. H (Eag) (TC 1.A.1.20) subfamily. Kv12.2/KCNH3 sub-subfamily. In terms of assembly, the potassium channel is probably composed of a homo- or heterotetrameric complex of pore-forming alpha subunits that can associate with modulating beta subunits. Interacts with KCNE1 and KCNE3; these interactions regulate KCNH3 trafficking to the plasma membrane and its subsequent voltage-gated potassium channel activity. Post-translationally, N-glycosylated. N-glycosylation mediates traffick to the cell membrane but is not necessary for voltage-gated potassium channel activity. Highly expressed in adult and embryonic brain, in particular in cerebellum, brain stem, hippocampus, cortex and striatum. Also found in pituitary.

It is found in the cell membrane. The catalysed reaction is K(+)(in) = K(+)(out). In terms of biological role, pore-forming (alpha) subunit of a voltage-gated inwardly rectifying potassium channel. Charactherized by a fast rate of activation during depolarization followed by a rapid inactivation at much more depolarized value causing inward rectification due to a C-type inactivation mechanism. Exhibits a rapid recovery from inactivation. This Rattus norvegicus (Rat) protein is Voltage-gated inwardly rectifying potassium channel KCNH3.